A 151-amino-acid polypeptide reads, in one-letter code: Deoxyuridine 5'-triphosphate nucleotidohydrolase (151 aa).

Substrate is bound by residues 70–72, Asn-83, 87–89, and Met-97; these read RSG and LID.

It belongs to the dUTPase family. The cofactor is Mg(2+).

The enzyme catalyses dUTP + H2O = dUMP + diphosphate + H(+). It participates in pyrimidine metabolism; dUMP biosynthesis; dUMP from dCTP (dUTP route): step 2/2. This enzyme is involved in nucleotide metabolism: it produces dUMP, the immediate precursor of thymidine nucleotides and it decreases the intracellular concentration of dUTP so that uracil cannot be incorporated into DNA. The polypeptide is Deoxyuridine 5'-triphosphate nucleotidohydrolase (Azotobacter vinelandii (strain DJ / ATCC BAA-1303)).